Here is a 570-residue protein sequence, read N- to C-terminus: Peptidyl-prolyl cis-trans isomerase CYP63 (570 aa).

One can recognise a PPIase cyclophilin-type domain in the interval 10–174 (FLDVSIGGDP…SPVKIIDCGE (165 aa)). Residues 180-570 (AHDAAEREKG…GKRGLVSYAD (391 aa)) form a disordered region. The span at 203–219 (VSDREAKETRKKESNEK) shows a compositional bias: basic and acidic residues. Composition is skewed to low complexity over residues 229-238 (SSDSYSSSSD) and 246-259 (EAYS…SSSS). The segment covering 262 to 292 (KHRKRKSTTRHKGRRGERKSKGRSGKKKARP) has biased composition (basic residues). Positions 297 to 309 (STNSSSDTESSSS) are enriched in low complexity. A compositionally biased stretch (basic and acidic residues) spans 323-339 (VKVDNADQHANLDDSVK). Serine 340 is subject to Phosphoserine. Over residues 340–351 (SRSRSPIRRRNQ) the composition is skewed to basic residues. A compositionally biased stretch (low complexity) spans 352 to 365 (NSRSKSPSRSPVRV). Composition is skewed to basic and acidic residues over residues 387–397 (SPREKPTEETV) and 437–467 (SPPR…ERSP). Positions 468–490 (RGRFRSPPRRRSPPRYNRRRRST) are enriched in basic residues. Basic and acidic residues predominate over residues 495–505 (DGYRRRLRDGS). Over residues 509–523 (SPRHRSRSQSPRKRQ) the composition is skewed to basic residues. A compositionally biased stretch (low complexity) spans 546–555 (SPAESLSPSH).

The protein belongs to the cyclophilin-type PPIase family. Interacts with SNRNP35, RNU1, SCL28, SCL30, SR30 and SR34. The binding to SR34 is phosphorylation-dependent. In terms of tissue distribution, ubiquitous.

Its subcellular location is the nucleus. It localises to the nucleoplasm. It is found in the nucleus speckle. It catalyses the reaction [protein]-peptidylproline (omega=180) = [protein]-peptidylproline (omega=0). Functionally, PPIases accelerate the folding of proteins. It catalyzes the cis-trans isomerization of proline imidic peptide bonds in oligopeptides. May be implicated in the folding, transport, and assembly of proteins. Probably involved in early steps of spliceosomal assembly. This is Peptidyl-prolyl cis-trans isomerase CYP63 (CYP63) from Arabidopsis thaliana (Mouse-ear cress).